The sequence spans 443 residues: Dynein regulatory complex protein 9 (443 aa).

Disordered stretches follow at residues 1–40 (MEED…LPKE) and 415–443 (GFKM…GKKK). Positions 393–422 (ELKSVIKLQAWWRGTMIRREIGGFKMPKDK) constitute an IQ domain. The segment covering 415 to 430 (GFKMPKDKVDSKDSKG) has biased composition (basic and acidic residues). The segment covering 431-443 (KGKGKDKRRGKKK) has biased composition (basic residues).

Belongs to the DRC9 family. In terms of assembly, component of the nexin-dynein regulatory complex (N-DRC). Interacts (via IQ domain) with CALM when calcium levels are low. Does not interact with CALM in the presence of Ca(2+). Interacts with the HSP70 proteins HSPA1L and HSPA8. May form a complex with CAMK4 and HSP70.

It localises to the cytoplasm. It is found in the cell projection. The protein localises to the cilium. The protein resides in the flagellum. Its subcellular location is the cytoskeleton. It localises to the flagellum axoneme. Functionally, component of the nexin-dynein regulatory complex (N-DRC), a key regulator of ciliary/flagellar motility which maintains the alignment and integrity of the distal axoneme and regulates microtubule sliding in motile axonemes. Binds calmodulin when cellular Ca(2+) levels are low and thereby contributes to the regulation of calcium and calmodulin-dependent protein kinase IV (CAMK4) activity; contributes to the regulation of CAMK4 signaling cascades. Required for normal axoneme assembly in sperm flagella, normal sperm tail formation and for male fertility. This is Dynein regulatory complex protein 9 (IQCG) from Macaca fascicularis (Crab-eating macaque).